The chain runs to 330 residues: Geranylgeranyl diphosphate synthase (330 aa).

Residues Lys-43, Arg-46, and His-75 each contribute to the isopentenyl diphosphate site. Positions 82 and 86 each coordinate Mg(2+). An all-trans-polyprenyl diphosphate is bound at residue Arg-91. Position 92 (Arg-92) interacts with isopentenyl diphosphate. An all-trans-polyprenyl diphosphate is bound by residues Lys-175, Thr-176, Gln-213, Lys-230, and Lys-240.

Belongs to the FPP/GGPP synthase family. Mg(2+) is required as a cofactor.

The catalysed reaction is isopentenyl diphosphate + (2E,6E)-farnesyl diphosphate = (2E,6E,10E)-geranylgeranyl diphosphate + diphosphate. It participates in isoprenoid biosynthesis; geranylgeranyl diphosphate biosynthesis; geranylgeranyl diphosphate from farnesyl diphosphate and isopentenyl diphosphate: step 1/1. Functionally, catalyzes the condensation of isopentenyl pyrophosphate with the allylic pyrophosphates to yield geranylgeranyl diphosphate (GGPP) which is a precursor of the ether-linked lipids. It is able to use dimethylallyl diphosphate (DMAPP), geranyl diphosphate (GPP), and (all-E)-geranyl diphosphate (E-FPP) as an allylic substrate. This Sulfolobus acidocaldarius (strain ATCC 33909 / DSM 639 / JCM 8929 / NBRC 15157 / NCIMB 11770) protein is Geranylgeranyl diphosphate synthase (gds).